Reading from the N-terminus, the 273-residue chain is MKKSGKWFSLAAALSVTAIVGAGCSMSNGDAQKDTKTTAETKQTEQKTADSKKSNTQNSEFSLESQYFNDIKKVDGLETIQNPENILALVNKQYALPGNYEPSDLVIPDVEFSFEEKIQKRYIRKEAADALKTMFDAAKKEGYELAAVSGYRSYDRQKVIFDNEVSLKGERKAKEAVAYPGESEHQTGLAMDISSRSNGFELNEAFGSTADGKWVQDNAYKYGFIIRYPKNKEDITKYEYEPWHLRYVGKKAAKVIQDNDLTLEEYFEKVKKI.

Positions 1–23 (MKKSGKWFSLAAALSVTAIVGAG) are cleaved as a signal peptide. A lipid anchor (N-palmitoyl cysteine) is attached at cysteine 24. Cysteine 24 is lipidated: S-diacylglycerol cysteine. The segment at 27–58 (SNGDAQKDTKTTAETKQTEQKTADSKKSNTQN) is disordered. Basic and acidic residues predominate over residues 31-53 (AQKDTKTTAETKQTEQKTADSKK).

This sequence belongs to the peptidase M15B family.

It is found in the cell membrane. In Bacillus subtilis (strain 168), this protein is Putative carboxypeptidase YodJ (yodJ).